A 171-amino-acid polypeptide reads, in one-letter code: MGALSSMFWALWYILPAYFANASPVLLGGGRPIDGGRKWRDGNRILGDGKTWRGFLGGVSVGTLVGVLQYYLTPAFYGSLKTAVLLAFLLSFGALMGDLVGSFIKRRLNLPRGYPAVGLDQLGFLISALAFAYPVKTISSGQMLFLLIFTPLVHWGANYFAYKMGWKSVPW.

A run of 5 helical transmembrane segments spans residues Met-7–Leu-27, Phe-55–Ala-75, Val-84–Ile-104, Pro-115–Val-135, and Gly-141–Ala-161.

It belongs to the CDP-archaeol synthase family. Mg(2+) is required as a cofactor.

It is found in the cell membrane. It catalyses the reaction 2,3-bis-O-(geranylgeranyl)-sn-glycerol 1-phosphate + CTP + H(+) = CDP-2,3-bis-O-(geranylgeranyl)-sn-glycerol + diphosphate. Its pathway is membrane lipid metabolism; glycerophospholipid metabolism. In terms of biological role, catalyzes the formation of CDP-2,3-bis-(O-geranylgeranyl)-sn-glycerol (CDP-archaeol) from 2,3-bis-(O-geranylgeranyl)-sn-glycerol 1-phosphate (DGGGP) and CTP. This reaction is the third ether-bond-formation step in the biosynthesis of archaeal membrane lipids. In Thermococcus gammatolerans (strain DSM 15229 / JCM 11827 / EJ3), this protein is CDP-archaeol synthase.